Consider the following 645-residue polypeptide: Acetyl-coenzyme A synthetase (645 aa).

Residues R190–R193, T309, and N333 contribute to the CoA site. Residues G385–P387, D409–T414, D498, and R513 contribute to the ATP site. CoA is bound at residue S521. R524 lines the ATP pocket. Residues V535, H537, and V540 each coordinate Mg(2+). R582 is a CoA binding site. K607 is modified (N6-acetyllysine).

This sequence belongs to the ATP-dependent AMP-binding enzyme family. Requires Mg(2+) as cofactor. In terms of processing, acetylated. Deacetylation by the SIR2-homolog deacetylase activates the enzyme.

The catalysed reaction is acetate + ATP + CoA = acetyl-CoA + AMP + diphosphate. In terms of biological role, catalyzes the conversion of acetate into acetyl-CoA (AcCoA), an essential intermediate at the junction of anabolic and catabolic pathways. AcsA undergoes a two-step reaction. In the first half reaction, AcsA combines acetate with ATP to form acetyl-adenylate (AcAMP) intermediate. In the second half reaction, it can then transfer the acetyl group from AcAMP to the sulfhydryl group of CoA, forming the product AcCoA. The sequence is that of Acetyl-coenzyme A synthetase from Beijerinckia indica subsp. indica (strain ATCC 9039 / DSM 1715 / NCIMB 8712).